Here is a 212-residue protein sequence, read N- to C-terminus: Coat protein (212 aa).

Belongs to the potexvirus capsid protein family.

The protein resides in the virion. Its function is as follows. Required for genome encapsidation. Forms ribonucleoprotein complexes along with TGB1 helicase and viral RNA. In Chenopodium album (Fat hen), this protein is Coat protein.